Here is a 131-residue protein sequence, read N- to C-terminus: Large ribosomal subunit protein bL17 (131 aa).

It belongs to the bacterial ribosomal protein bL17 family. Part of the 50S ribosomal subunit. Contacts protein L32.

This Janthinobacterium sp. (strain Marseille) (Minibacterium massiliensis) protein is Large ribosomal subunit protein bL17.